The primary structure comprises 285 residues: Phospholipid phosphatase 1 (285 aa).

At 1 to 6 the chain is on the cytoplasmic side; sequence MFDKAR. The PDZ-binding; involved in localization to the apical cell membrane signature appears at 5 to 7; sequence ARL. A helical transmembrane segment spans residues 7–27; the sequence is LPYVALDVLCVVLAGLPFAIL. The Extracellular segment spans residues 28–53; it reads TSRHTPFQRGIFCNDESIKYPYKEDT. The chain crosses the membrane as a helical span at residues 54–74; the sequence is IPYALLGGIMIPFSIVVMIIG. At 75 to 94 the chain is on the cytoplasmic side; the sequence is ETLSVYCNLLHSNSFIRNNY. Residues 95–115 form a helical membrane-spanning segment; the sequence is IATIYKSIGTFLFGAAASQSL. Residues 116–165 are Extracellular-facing; it reads TDIAKYSIGRLRPHFLSVCDPDWSKVNCSDGYIEYYVCRGNAEKVKEGRL. The phosphatase sequence motif I stretch occupies residues 120–128; the sequence is KYSIGRLRP. A glycan (N-linked (GlcNAc...) asparagine) is linked at N142. The helical transmembrane segment at 166–186 threads the bilayer; it reads SFYSGHSSFSMYCMVFVALYL. A phosphatase sequence motif II region spans residues 168–171; it reads YSGH. The active-site Proton donors is H171. Topologically, residues 187–199 are cytoplasmic; the sequence is QARMKGDWARLLR. The helical transmembrane segment at 200–220 threads the bilayer; the sequence is PTLQFGLVAASIYVGLSRISD. The segment at 216–227 is phosphatase sequence motif III; the sequence is SRISDYKHHWSD. Residues 221-229 are Extracellular-facing; sequence YKHHWSDVL. Catalysis depends on H223, which acts as the Nucleophile. A helical transmembrane segment spans residues 230–250; sequence TGLIQGAIVAILVAVYVSDFF. Residues 251-285 are Cytoplasmic-facing; it reads KARNSPFQERKEEDSHTTLHETPTAGNHYRSNHQP. Residues 260–269 show a composition bias toward basic and acidic residues; that stretch reads RKEEDSHTTL. The tract at residues 260-285 is disordered; it reads RKEEDSHTTLHETPTAGNHYRSNHQP.

This sequence belongs to the PA-phosphatase related phosphoesterase family. Forms functional homodimers and homooligomers that are not required for substrate recognition and catalytic activity. Can also form heterooligomers with PLPP2 and PLPP3. N-glycosylated. N-linked sugars are of the complex type. N-glycosylation is not required for the phosphatase activity.

It localises to the cell membrane. The protein resides in the apical cell membrane. The protein localises to the membrane raft. Its subcellular location is the membrane. It is found in the caveola. It catalyses the reaction a 1,2-diacyl-sn-glycero-3-phosphate + H2O = a 1,2-diacyl-sn-glycerol + phosphate. The catalysed reaction is 1,2-dihexadecanoyl-sn-glycero-3-phosphate + H2O = 1,2-dihexadecanoyl-sn-glycerol + phosphate. It carries out the reaction 1,2-di-(9Z-octadecenoyl)-sn-glycero-3-phosphate + H2O = 1,2-di-(9Z-octadecenoyl)-sn-glycerol + phosphate. The enzyme catalyses a monoacyl-sn-glycero-3-phosphate + H2O = a monoacylglycerol + phosphate. It catalyses the reaction (9Z)-octadecenoyl-sn-glycero-3-phosphate + H2O = (9Z-octadecenoyl)-glycerol + phosphate. The catalysed reaction is a 1-acyl-sn-glycero-3-phosphate + H2O = a 1-acyl-sn-glycerol + phosphate. It carries out the reaction 1-(9Z-octadecenoyl)-sn-glycero-3-phosphate + H2O = 1-(9Z-octadecenoyl)-sn-glycerol + phosphate. The enzyme catalyses a 1,2-diacyl-sn-glycerol 3-diphosphate + H2O = a 1,2-diacyl-sn-glycero-3-phosphate + phosphate + H(+). It catalyses the reaction sphing-4-enine 1-phosphate + H2O = sphing-4-enine + phosphate. The catalysed reaction is an N-acylsphing-4-enine 1-phosphate + H2O = an N-acylsphing-4-enine + phosphate. It carries out the reaction N-(octanoyl)-sphing-4-enine-1-phosphate + H2O = N-octanoylsphing-4-enine + phosphate. The enzyme catalyses N-(9Z-octadecenoyl)-ethanolamine phosphate + H2O = N-(9Z-octadecenoyl) ethanolamine + phosphate. It catalyses the reaction 1-hexadecanoyl-2-(9Z-octadecenoyl)-sn-glycero-3-phosphate + H2O = 1-hexadecanoyl-2-(9Z-octadecenoyl)-sn-glycerol + phosphate. It participates in lipid metabolism; phospholipid metabolism. Magnesium-independent phospholipid phosphatase. Insensitive to N-ethylmaleimide. In terms of biological role, magnesium-independent phospholipid phosphatase of the plasma membrane that catalyzes the dephosphorylation of a variety of glycerolipid and sphingolipid phosphate esters including phosphatidate/PA, lysophosphatidate/LPA, diacylglycerol pyrophosphate/DGPP, sphingosine 1-phosphate/S1P and ceramide 1-phosphate/C1P. Also acts on N-oleoyl ethanolamine phosphate/N-(9Z-octadecenoyl)-ethanolamine phosphate, a potential physiological compound. Through its extracellular phosphatase activity allows both the hydrolysis and the cellular uptake of these bioactive lipid mediators from the milieu, regulating signal transduction in different cellular processes. It is for instance essential for the extracellular hydrolysis of S1P and subsequent conversion into intracellular S1P. Involved in the regulation of inflammation, platelets activation, cell proliferation and migration among other processes. May also have an intracellular activity to regulate phospholipid-mediated signaling pathways. The protein is Phospholipid phosphatase 1 of Cavia porcellus (Guinea pig).